The chain runs to 84 residues: Large ribosomal subunit protein uL23 (84 aa).

This sequence belongs to the universal ribosomal protein uL23 family. Part of the 50S ribosomal subunit. Contacts protein L29.

Binds to 23S rRNA. One of the proteins that surrounds the polypeptide exit tunnel on the outside of the ribosome. This chain is Large ribosomal subunit protein uL23, found in Haloquadratum walsbyi (strain DSM 16790 / HBSQ001).